Consider the following 928-residue polypeptide: Protein Niban 1 (928 aa).

Glycine 2 carries N-myristoyl glycine lipidation. Phosphoserine is present on residues serine 579, serine 582, serine 596, serine 602, and serine 646. The span at 580 to 596 (VSSLTDLKPPTGSNQAS) shows a compositional bias: polar residues. Residues 580–600 (VSSLTDLKPPTGSNQASPARR) form a disordered region. Disordered stretches follow at residues 618 to 654 (VFQESEEEKQPEVPSSLAKGESLSLPGPSPPPDGTEQ) and 669 to 707 (ATEDTAGLPGTCSSELEFGGTLEDEEPAQEEPEPITASG). Over residues 690–701 (LEDEEPAQEEPE) the composition is skewed to acidic residues. Residue serine 708 is modified to Phosphoserine. Disordered regions lie at residues 723 to 877 (PVDS…ATAS) and 899 to 928 (PNPDVLLSHKDDVKEGEGGQESFPELPSEE). Residues 801–818 (GGLTEEPLGPMEGELPGE) show a composition bias toward low complexity. The segment covering 825 to 834 (HEGRGGKCTE) has biased composition (basic and acidic residues). Low complexity predominate over residues 865–877 (MGGQSSAAQATAS). Over residues 905 to 915 (LSHKDDVKEGE) the composition is skewed to basic and acidic residues. Serine 926 bears the Phosphoserine mark.

Belongs to the Niban family. As to expression, expressed in various types of thyroid tumor such as papillary thyroid carcinomas and oxyphilic thyroid tumors but not in normal thyroid tissue (at protein level). Strongly expressed in heart, skeletal muscle, pancreas, white blood cells and prostate with moderate expression in colon and spleen. Expressed in renal carcinoma cells but not in normal kidney.

It is found in the cytoplasm. It localises to the membrane. Regulates phosphorylation of a number of proteins involved in translation regulation including EIF2A, EIF4EBP1 and RPS6KB1. May be involved in the endoplasmic reticulum stress response. This chain is Protein Niban 1, found in Homo sapiens (Human).